A 492-amino-acid chain; its full sequence is Propanoyl-CoA:succinate CoA transferase (492 aa).

Residue glycine 260–isoleucine 264 coordinates CoA. Residue glutamate 286 is the 5-glutamyl coenzyme A thioester intermediate of the active site. 2 residues coordinate CoA: asparagine 376 and glycine 380.

Belongs to the acetyl-CoA hydrolase/transferase family.

The catalysed reaction is propanoyl-CoA + succinate = propanoate + succinyl-CoA. Its function is as follows. Catalyzes the transfer of coenzyme A from propionyl-CoA to succinate. Could be part of a pathway that converts succinate to propionate. The chain is Propanoyl-CoA:succinate CoA transferase from Escherichia coli (strain K12).